A 202-amino-acid polypeptide reads, in one-letter code: ATP-dependent Clp protease proteolytic subunit 1 (202 aa).

Ser99 (nucleophile) is an active-site residue. His123 is an active-site residue.

Belongs to the peptidase S14 family. In terms of assembly, fourteen ClpP subunits assemble into 2 heptameric rings which stack back to back to give a disk-like structure with a central cavity, resembling the structure of eukaryotic proteasomes.

Its subcellular location is the cytoplasm. It catalyses the reaction Hydrolysis of proteins to small peptides in the presence of ATP and magnesium. alpha-casein is the usual test substrate. In the absence of ATP, only oligopeptides shorter than five residues are hydrolyzed (such as succinyl-Leu-Tyr-|-NHMec, and Leu-Tyr-Leu-|-Tyr-Trp, in which cleavage of the -Tyr-|-Leu- and -Tyr-|-Trp bonds also occurs).. Its function is as follows. Cleaves peptides in various proteins in a process that requires ATP hydrolysis. Has a chymotrypsin-like activity. Plays a major role in the degradation of misfolded proteins. The chain is ATP-dependent Clp protease proteolytic subunit 1 from Symbiobacterium thermophilum (strain DSM 24528 / JCM 14929 / IAM 14863 / T).